We begin with the raw amino-acid sequence, 244 residues long: Triosephosphate isomerase (244 aa).

9 to 11 contributes to the substrate binding site; the sequence is NWK. Catalysis depends on histidine 93, which acts as the Electrophile. Catalysis depends on glutamate 160, which acts as the Proton acceptor. Residues glycine 166 and serine 206 each contribute to the substrate site.

Belongs to the triosephosphate isomerase family. Homodimer.

It is found in the cytoplasm. It carries out the reaction D-glyceraldehyde 3-phosphate = dihydroxyacetone phosphate. It participates in carbohydrate biosynthesis; gluconeogenesis. The protein operates within carbohydrate degradation; glycolysis; D-glyceraldehyde 3-phosphate from glycerone phosphate: step 1/1. Its function is as follows. Involved in the gluconeogenesis. Catalyzes stereospecifically the conversion of dihydroxyacetone phosphate (DHAP) to D-glyceraldehyde-3-phosphate (G3P). The polypeptide is Triosephosphate isomerase (Mycoplasma genitalium (strain ATCC 33530 / DSM 19775 / NCTC 10195 / G37) (Mycoplasmoides genitalium)).